Here is a 79-residue protein sequence, read N- to C-terminus: Small ribosomal subunit protein bS18B (79 aa).

This sequence belongs to the bacterial ribosomal protein bS18 family. In terms of assembly, part of the 30S ribosomal subunit. Forms a tight heterodimer with protein bS6.

Its function is as follows. Binds as a heterodimer with protein bS6 to the central domain of the 16S rRNA, where it helps stabilize the platform of the 30S subunit. This Mycolicibacterium gilvum (strain PYR-GCK) (Mycobacterium gilvum (strain PYR-GCK)) protein is Small ribosomal subunit protein bS18B.